The chain runs to 451 residues: Ribosomal protein uS12 methylthiotransferase RimO (451 aa).

In terms of domain architecture, MTTase N-terminal spans 17–127 (PTIGFVSLGC…VLAQVHEHLP (111 aa)). [4Fe-4S] cluster-binding residues include Cys-26, Cys-62, Cys-91, Cys-160, Cys-164, and Cys-167. The region spanning 146–383 (LTPRHYAYLK…MQLQQRISTE (238 aa)) is the Radical SAM core domain. In terms of domain architecture, TRAM spans 386–451 (KQKVGQTLPV…DEYDLWGTRV (66 aa)).

This sequence belongs to the methylthiotransferase family. RimO subfamily. The cofactor is [4Fe-4S] cluster.

It is found in the cytoplasm. It catalyses the reaction L-aspartate(89)-[ribosomal protein uS12]-hydrogen + (sulfur carrier)-SH + AH2 + 2 S-adenosyl-L-methionine = 3-methylsulfanyl-L-aspartate(89)-[ribosomal protein uS12]-hydrogen + (sulfur carrier)-H + 5'-deoxyadenosine + L-methionine + A + S-adenosyl-L-homocysteine + 2 H(+). In terms of biological role, catalyzes the methylthiolation of an aspartic acid residue of ribosomal protein uS12. In Cellvibrio japonicus (strain Ueda107) (Pseudomonas fluorescens subsp. cellulosa), this protein is Ribosomal protein uS12 methylthiotransferase RimO.